Consider the following 790-residue polypeptide: Cadherin-18 (790 aa).

The signal sequence occupies residues 1-24 (MKITSTSCICPVLVCLCFVQRCYG). A propeptide spanning residues 25–53 (TTHHGSIRGTRNQTKHIEGETEVHHRPKR) is cleaved from the precursor. Asparagine 36 carries an N-linked (GlcNAc...) asparagine glycan. Cadherin domains lie at 54–159 (GWVW…APKF), 160–268 (TDGP…PPRF), 269–383 (PQKH…PPLF), 384–486 (SMPS…DNPP), and 487–608 (ELAR…FLSS). The Extracellular portion of the chain corresponds to 54 to 608 (GWVWNQFFVL…TCHAEAFLSS (555 aa)). The N-linked (GlcNAc...) asparagine glycan is linked to asparagine 255. N-linked (GlcNAc...) asparagine glycosylation is found at asparagine 455 and asparagine 536. Residues 609–636 (AGLSTGALIAILLCVVILLAIVVLFITL) traverse the membrane as a helical segment. The Cytoplasmic segment spans residues 637-790 (RRSKKEPLII…YGEIESERTT (154 aa)). Serine 786 carries the post-translational modification Phosphoserine.

Its subcellular location is the cell membrane. Cadherins are calcium-dependent cell adhesion proteins. They preferentially interact with themselves in a homophilic manner in connecting cells; cadherins may thus contribute to the sorting of heterogeneous cell types. The sequence is that of Cadherin-18 (CDH18) from Bos taurus (Bovine).